The following is a 2359-amino-acid chain: MWNNNDGMPLAPPGTGGSMMPPPPAAHPSYTALPPPSNPTPPVEPTPEEAEAKLEEKARKWMQLNSKRYGDKRKFGFVETQKEDMPPEHVRKIIRDHGDMSSKKFRHDKRVYLGALKFVPHAVFKLLENMPMPWEQVRDVKVLYHITGAITFVNEIPWVVEPIYMAQWGTMWIMMRREKRDRRHFKRMRFPPFDDEEPPLDYADNLLDVDPLEPIQLELDEEEDSAVHTWFYDHKPLVKTKLINGPSYRRWNLSLPIMATLHRLAGQLLSDLIDRNYFYLFDMPSFFTAKALNMCIPGGPKFEPLYRDMEKGDEDWNEFNDINKLIIRSPLRTEYRIAFPHLYNNRPRKVKLCVYHSPMIMYIKTEDPDLPAFYYDPLIHPISNTNKEKRERKVYDDEDDFALPEGVEPLLRDTQLYTDTTAAGISLLFAPRPFNMRSGRTRRAEDIPLVSEWFKEHCPPAYPVKVRVSYQKLLKCYVLNELHHRPPKAQKKKHLFRSLAATKFFQSTELDWVEVGLQVCRQGYNMLNLLIHRKNLNYLHLDYNFNLKPVKTLTTKERKKSRFGNAFHLCREILRLTKLVVDANVQFRLGNVDAFQLADGLQYIFSHVGQLTGMYRYKYRLMRQIRMCKDLKHLIYYRFNTGPVGKGPGCGFWAPMWRVWLFFLRGIVPLLERWLGNLLARQFEGRHSKGVAKTVTKQRVESHFDLELRAAVMHDVLDAMPEGIKQNKARTILQHLSEAWRCWKANIPWKVPGLPVPIENMILRYVKSKADWWTNVAHYNRERIRRGATVDKTVCRKNLGRLTRLWLKAEQERQHNYLKDGPYVTPEEALAIYTTTVHWLESRKFSPIPFPPLSYKHDTKLLILALERLKESYSVAVRLNQQQREELGLIEQAYDNPHEALSRIKRHLLTQRGFKEVGIEFMDLYSYLIPVYEIEPLEKITDAYLDQYLWYEGDKRHLFPNWIKPADSEPPPLLVYKWCQGINNLQGIWDTGDGQCVVMLQTKFEKFFEKIDLTMLNRLLRLVLDHNIADYVSAKNNVVLSYKDMSHTNSYGLIRGLQFASFVVQFYGLLLDLLLLGLTRASEIAGPPQMPNEFMTFWDTKVETRHPIRLYSRYIDKVHIMFKFTHEEARDLIQRYLTEHPDPNNENMVGYNNKKCWPRDARMRLMKHDVNLGRSVFWDMKNRLPRSITTLEWENGFVSVYSKDNPNLLFSMCGFEVRILPKIRMTQEAFSNTKDGVWNLQNEQTKERTAVAFLRVDDEHMKVFENRVRQILMSSGSTTFTKIVNKWNTALIGLMTYFREATVHTQELLDLLVKCENKIQTRIKIGLNSKMPSRFPPVIFYTPKEIGGLGMLSMGHILIPQSDLRYSKQTDVGVTHFRSGMSHEEDQLIPNLYRYIQPWESEFIDSQRVWAEYALKRQEAQAQNRRLTLEDLEDSWDRGIPRINTLFQKDRHTLAYDKGWRVRTDFKQYQVLKQNPFWWTHQRHDGKLWNLNNYRTDVIQALGGVEGILEHTLFKGTYFPTWEGLFWEKASGFEESMKYKKLTNAQRSGLNQIPNRRFTLWWSPTINRANVYVGFQVQLDLTGIFMHGKIPTLKISLIQIFRAHLWQKIHESVVMDLCQVLDQELDALEIETVQKETIHPRKSYKMNSSCADVLLFAAHKWPMSKPSLVAESKDMFDQKASNKYWIDVQLRWGDYDSHDIERYTRAKFMDYTTDNMSIYPSPTGVMIGLDLAYNLHSAFGNWFPGSKPLLAQAMNKIMKSNPALYVLRERIRKGLQLYSSEPTEPYLSSQNYGEIFSNQIIWFVDDTNVYRVTIHKTFEGNLTTKPINGAIFIFNPRTGQLFLKVIHTSVWAGQKRLGQLAKWKTAEEVAALVRSLPVEEQPKQIIVTRKGMLDPLEVHLLDFPNIVIKGSELQLPFQACLKIEKFGDLILKATEPQMVLFNIYDDWLKSISSYTAFSRLILILRALHVNNEKAKMLLKPDKSVVTEPHHIWPSLTDDQWMKVEVALRDLILSDYAKKNNVNTSALTQSEIRDIILGAEITPPSQQRQQIAEIEKQAKEASQLTAVTTRTTNVHGDELIVTTTSPYEQSAFGSKTDWRVRAISATNLYLRVNHIYVNSDDIKETGYTYIMPKNILKKFICVADLRTQIAGYLYGISPPDNPQVKEIRCVVMVPQWGNHQLVHLPSSLPEHDFLNDLEPLGWLHTQPNELPQLSPQDVTSHSRILENNKQWDGEKCIILTCSFTPGSCSLTSYKLTQTGYEWGRLNKDNGSNPHGYLPTHYEKVQMLLSDRFLGFYMVPESGPWNYSFTGVKHTLSMKYSVKLGSPKEFYHEEHRPTHFLEFSNMEEADITEGDREDTFT.

The tract at residues 1–54 is disordered; it reads MWNNNDGMPLAPPGTGGSMMPPPPAAHPSYTALPPPSNPTPPVEPTPEEAEAKL. Over residues 33-45 the composition is skewed to pro residues; sequence LPPPSNPTPPVEP. The region spanning 2127–2258 is the MPN domain; the sequence is TYIMPKNILK…LTSYKLTQTG (132 aa).

As to quaternary structure, interacts with CLO.

Its subcellular location is the nucleus. Its function is as follows. Functions as a scaffold that mediates the ordered assembly of spliceosomal proteins and snRNAs. Required for the assembly of the U4/U6-U5 tri-snRNP complex. Required for embryo development. Required for splicing efficiency of COOLAIR introns and usage of the proximal poly(A) site. COOLAIR is a set of long non-coding antisense transcripts produced at the FLOWERING LOCUS C (FLC). COOLAIR initiates just downstream of the major sense transcript poly(A) site and terminates either early or extends into the FLC promoter region. Splicing of COOLAIR by PRP8A is functionally important for FLC regulation. The sequence is that of Pre-mRNA-processing-splicing factor 8A from Arabidopsis thaliana (Mouse-ear cress).